The following is a 96-amino-acid chain: Large ribosomal subunit protein uL23 (96 aa).

It belongs to the universal ribosomal protein uL23 family. Part of the 50S ribosomal subunit. Contacts protein L29, and trigger factor when it is bound to the ribosome.

One of the early assembly proteins it binds 23S rRNA. One of the proteins that surrounds the polypeptide exit tunnel on the outside of the ribosome. Forms the main docking site for trigger factor binding to the ribosome. The protein is Large ribosomal subunit protein uL23 of Nitratidesulfovibrio vulgaris (strain DSM 19637 / Miyazaki F) (Desulfovibrio vulgaris).